A 1883-amino-acid chain; its full sequence is Transmembrane protein 131 (1883 aa).

A signal peptide spans 1–22 (MGKRAGGGATGATTAAVSTSAG). Residues 23–1117 (AGLEPAAARS…AEALPRPNWE (1095 aa)) lie on the Lumenal side of the membrane. The papD-L domain stretch occupies residues 109-283 (RFEPPMLDFH…ETKGVMRASF (175 aa)). N-linked (GlcNAc...) asparagine glycosylation is present at Asn300. Phosphoserine is present on Ser803. The helical transmembrane segment at 1118-1138 (LALYIIISGIMSALFLLVIGT) threads the bilayer. Residues 1139 to 1883 (AYLEAQGIWE…WSNSHFPHEN (745 aa)) lie on the Cytoplasmic side of the membrane. 5 disordered regions span residues 1198-1580 (GAGG…DSLY), 1593-1656 (LKQR…KNGN), 1670-1712 (PGGN…PVSN), 1766-1789 (WESP…HTAT), and 1832-1858 (MGTE…TYNP). A compositionally biased stretch (low complexity) spans 1237 to 1261 (AKNSSSTSSRTSAQAASSQSANKTS). Residues 1302 to 1316 (PQPPLPPPVPQPQEP) are compositionally biased toward pro residues. 2 positions are modified to phosphoserine: Ser1322 and Ser1342. Basic and acidic residues-rich tracts occupy residues 1330 to 1343 (SHPE…HSSE) and 1353 to 1364 (AMDKDFDHHDSP). Ser1375 bears the Phosphoserine mark. A compositionally biased stretch (basic residues) spans 1380–1394 (SKGKGKPLQRKVKPP). Residues 1395–1417 (KKQEEKEKKGKGKPQEDELKDSL) show a composition bias toward basic and acidic residues. Over residues 1423–1434 (SSTTTETSNPDT) the composition is skewed to low complexity. The span at 1436-1458 (PLLKEDTEKQKGKQAMPEKHESE) shows a compositional bias: basic and acidic residues. Polar residues-rich tracts occupy residues 1510 to 1526 (AMTS…TKGT) and 1542 to 1553 (PNSQELGNTSSS). Residues 1602–1611 (PASPSPPAAP) are compositionally biased toward pro residues. Over residues 1619–1630 (SYSSIVNSSSSS) the composition is skewed to low complexity. Over residues 1678–1690 (VSSNKTGFSSSLG) the composition is skewed to polar residues. 2 stretches are compositionally biased toward low complexity: residues 1773–1784 (PSPSWPASSGSP) and 1837–1849 (SPAP…SSPA). 2 positions are modified to phosphoserine: Ser1863 and Ser1871.

It belongs to the TMEM131 family. Interacts (via PapD-L domain) with COL1A2 (via C-terminus); the interaction is direct, may occur with other collagen proteins, and is involved in assembly and TRAPPIII ER-to-Golgi transport complex-dependent secretion of collagen. Interacts (via C-terminus) with TRAPPC8 (via C-terminus); the interaction is direct.

The protein localises to the membrane. Collagen binding transmembrane protein involved in collagen secretion by recruiting the ER-to-Golgi transport complex TRAPPIII. May play a role in the immune response to viral infection. In Homo sapiens (Human), this protein is Transmembrane protein 131.